A 309-amino-acid polypeptide reads, in one-letter code: NAD kinase (309 aa).

Catalysis depends on D89, which acts as the Proton acceptor. NAD(+) contacts are provided by residues 89–90, 163–164, H174, R191, D193, and 204–209; these read DG, NE, and TAYSLS.

This sequence belongs to the NAD kinase family. Requires a divalent metal cation as cofactor.

It localises to the cytoplasm. The enzyme catalyses NAD(+) + ATP = ADP + NADP(+) + H(+). Involved in the regulation of the intracellular balance of NAD and NADP, and is a key enzyme in the biosynthesis of NADP. Catalyzes specifically the phosphorylation on 2'-hydroxyl of the adenosine moiety of NAD to yield NADP. This chain is NAD kinase, found in Shewanella piezotolerans (strain WP3 / JCM 13877).